We begin with the raw amino-acid sequence, 184 residues long: Cytochrome c homolog (184 aa).

Residues 1–10 (MDSFELNKIL) are Cytoplasmic-facing. Residues 11 to 31 (GAVLGTCLILLVTSFTANALF) form a helical; Signal-anchor membrane-spanning segment. At 32–184 (SPKMPEKPGF…HPKPLPTASK (153 aa)) the chain is on the periplasmic side. Heme c-binding residues include Cys84, Cys87, His88, and Met151.

It belongs to the cytochrome c family. Binds 1 heme c group covalently per subunit.

Its subcellular location is the cell membrane. May be involved in electron transfer from bc1 complex to aa3. The chain is Cytochrome c homolog (cycM) from Bradyrhizobium diazoefficiens (strain JCM 10833 / BCRC 13528 / IAM 13628 / NBRC 14792 / USDA 110).